The following is a 110-amino-acid chain: Phosphoribosyl-AMP cyclohydrolase (110 aa).

D80 is a binding site for Mg(2+). Residue C81 participates in Zn(2+) binding. 2 residues coordinate Mg(2+): D82 and D84. Zn(2+) is bound by residues C97 and C104.

This sequence belongs to the PRA-CH family. In terms of assembly, homodimer. Mg(2+) serves as cofactor. The cofactor is Zn(2+).

It is found in the cytoplasm. The catalysed reaction is 1-(5-phospho-beta-D-ribosyl)-5'-AMP + H2O = 1-(5-phospho-beta-D-ribosyl)-5-[(5-phospho-beta-D-ribosylamino)methylideneamino]imidazole-4-carboxamide. It functions in the pathway amino-acid biosynthesis; L-histidine biosynthesis; L-histidine from 5-phospho-alpha-D-ribose 1-diphosphate: step 3/9. Its function is as follows. Catalyzes the hydrolysis of the adenine ring of phosphoribosyl-AMP. This Clostridium botulinum (strain ATCC 19397 / Type A) protein is Phosphoribosyl-AMP cyclohydrolase.